Reading from the N-terminus, the 100-residue chain is Co-chaperonin GroES (100 aa).

The protein belongs to the GroES chaperonin family. In terms of assembly, heptamer of 7 subunits arranged in a ring. Interacts with the chaperonin GroEL.

Its subcellular location is the cytoplasm. In terms of biological role, together with the chaperonin GroEL, plays an essential role in assisting protein folding. The GroEL-GroES system forms a nano-cage that allows encapsulation of the non-native substrate proteins and provides a physical environment optimized to promote and accelerate protein folding. GroES binds to the apical surface of the GroEL ring, thereby capping the opening of the GroEL channel. The polypeptide is Co-chaperonin GroES (Nocardia farcinica (strain IFM 10152)).